A 333-amino-acid polypeptide reads, in one-letter code: DNA repair and recombination protein RadA (333 aa).

Residue 127–134 (GEFGSGKT) participates in ATP binding.

It belongs to the eukaryotic RecA-like protein family.

Involved in DNA repair and in homologous recombination. Binds and assemble on single-stranded DNA to form a nucleoprotein filament. Hydrolyzes ATP in a ssDNA-dependent manner and promotes DNA strand exchange between homologous DNA molecules. This is DNA repair and recombination protein RadA from Pyrobaculum arsenaticum (strain DSM 13514 / JCM 11321 / PZ6).